Reading from the N-terminus, the 396-residue chain is S-adenosylmethionine decarboxylase proenzyme (396 aa).

Active-site residues include E29 and E32. Residue S88 is the Schiff-base intermediate with substrate; via pyruvic acid of the active site. S88 carries the post-translational modification Pyruvic acid (Ser); by autocatalysis. C102 serves as the catalytic Proton donor; for catalytic activity. Active-site proton acceptor; for processing activity residues include S287 and H301.

The protein belongs to the eukaryotic AdoMetDC family. Requires pyruvate as cofactor. Post-translationally, is synthesized initially as an inactive proenzyme. Formation of the active enzyme involves a self-maturation process in which the active site pyruvoyl group is generated from an internal serine residue via an autocatalytic post-translational modification. Two non-identical subunits are generated from the proenzyme in this reaction, and the pyruvate is formed at the N-terminus of the alpha chain, which is derived from the carboxyl end of the proenzyme. The post-translation cleavage follows an unusual pathway, termed non-hydrolytic serinolysis, in which the side chain hydroxyl group of the serine supplies its oxygen atom to form the C-terminus of the beta chain, while the remainder of the serine residue undergoes an oxidative deamination to produce ammonia and the pyruvoyl group blocking the N-terminus of the alpha chain.

It catalyses the reaction S-adenosyl-L-methionine + H(+) = S-adenosyl 3-(methylsulfanyl)propylamine + CO2. Its pathway is amine and polyamine biosynthesis; S-adenosylmethioninamine biosynthesis; S-adenosylmethioninamine from S-adenosyl-L-methionine: step 1/1. In terms of biological role, catalyzes the decarboxylation of S-adenosylmethionine, a key step in the biosynthetic pathway for spermidine and spermine. It is essential for normal growth, sporulation, and maintenance of ds-RNA virus. This chain is S-adenosylmethionine decarboxylase proenzyme (SPE2), found in Saccharomyces cerevisiae (strain ATCC 204508 / S288c) (Baker's yeast).